Reading from the N-terminus, the 240-residue chain is Uridylate kinase (240 aa).

13–16 (KASG) is a binding site for ATP. The interval 21-26 (GSQGFG) is involved in allosteric activation by GTP. Glycine 55 contributes to the UMP binding site. Residues glycine 56 and arginine 60 each coordinate ATP. UMP-binding positions include aspartate 75 and 136-143 (TGNPFFTT). ATP is bound by residues threonine 163, glutamine 164, tyrosine 169, and aspartate 172.

It belongs to the UMP kinase family. Homohexamer.

Its subcellular location is the cytoplasm. It catalyses the reaction UMP + ATP = UDP + ADP. Its pathway is pyrimidine metabolism; CTP biosynthesis via de novo pathway; UDP from UMP (UMPK route): step 1/1. Its activity is regulated as follows. Allosterically activated by GTP. Inhibited by UTP. Functionally, catalyzes the reversible phosphorylation of UMP to UDP. In Sinorhizobium medicae (strain WSM419) (Ensifer medicae), this protein is Uridylate kinase.